The primary structure comprises 492 residues: Protein odr-4 homolog (492 aa).

Positions 251 to 270 (LQPTSTTGGTATASSNTTDS) are disordered. The span at 254–268 (TSTTGGTATASSNTT) shows a compositional bias: low complexity. A helical membrane pass occupies residues 469–489 (MVGIAVALLVLLSSVALHFVL).

Belongs to the ODR-4 family.

The protein resides in the membrane. May play a role in the trafficking of a subset of G-protein coupled receptors. The protein is Protein odr-4 homolog of Drosophila melanogaster (Fruit fly).